Consider the following 239-residue polypeptide: Ribonuclease PH (239 aa).

Residues Arg86 and 124–126 contribute to the phosphate site; that span reads GTR.

The protein belongs to the RNase PH family. In terms of assembly, homohexameric ring arranged as a trimer of dimers.

It catalyses the reaction tRNA(n+1) + phosphate = tRNA(n) + a ribonucleoside 5'-diphosphate. Phosphorolytic 3'-5' exoribonuclease that plays an important role in tRNA 3'-end maturation. Removes nucleotide residues following the 3'-CCA terminus of tRNAs; can also add nucleotides to the ends of RNA molecules by using nucleoside diphosphates as substrates, but this may not be physiologically important. Probably plays a role in initiation of 16S rRNA degradation (leading to ribosome degradation) during starvation. This is Ribonuclease PH from Rickettsia africae (strain ESF-5).